Reading from the N-terminus, the 907-residue chain is MFSKILTKVIGSRNDRTLRKLRKIVDQINKLEPQFESLQDEELKAKTIEFRARLEQGEDLDNLLPEAFATVREASKRLYGMRHFDVQMIGGMVLNDSQIAEMRTGEGKTLTATLPCYLNALTGKGVHVVTVNDYLAKRDAETNRELFEFLGMTVGVNVPNMPPQEKKQAYLCDILYGTNNEFGFDYLRDNMAFRAEDRVQRERYFAVVDEVDSILIDEARTPLIISGPAEDSSELYIRINTLIPQLVKQDEEDSEEYRGEGHYTLDEKGKQTHLTENGQEFVEQLLKDAGLMEEDDTLYSPANISLLHHINAALRAHVLFEKDVDYIVKDDEVIIVDEHTGRTMPGRRWSEGLHQAVEAKEGVKIQNENQTLASITFQNFFRLYEKLSGMTGTADTEAFEFQSIYGLDTVVIPTNRPMARNDMGDLVYMTEAEKFAAIIEDIKGCSERGQPVLVGTVSIEKSELLSNALKKAKIKHNVLNAKFHEQEADIVANAGTASAVTIATNMAGRGTDIVLGGSWQADVAKLSDPTEEQIQAVKAKWKEAHDAVLASGGLHIIGTERHESRRIDNQLRGRAGRQGDAGSSRFYLSMEDALMRIFASDRVSGMMKKLGMEEGEAIEHPWVTKAIENAQRKVEGRNFDIRKQLLEYDDVANDQRKVVYELRDELMNVDDISEMIGYNRQEVLEGLFGQYIPPQSLEEMWDVEGLTTRLRADFDLDLPLQEWLDNDDKLHEDNLREKIIEAAVQVYKEKEESVGESVLRNFEKAVMLQTLDGLWKEHLAAMDHLRQGIHLRGYAQKNPKQEYKRESFELFEGLLDTLKFDVVSILSKVRVQQQEDVERMEEQRRLQAEEAARRQQLQHQNAENQLDDGEGAEEAHSPMVREERKVGRNEPCPCGSGKKYKQCHGKI.

ATP is bound by residues Gln87, 105–109, and Asp512; that span reads GEGKT. The tract at residues 834 to 907 is disordered; it reads QEDVERMEEQ…KKYKQCHGKI (74 aa). Basic and acidic residues-rich tracts occupy residues 836-853 and 873-888; these read DVERMEEQRRLQAEEAAR and EEAHSPMVREERKVGR. Zn(2+)-binding residues include Cys892, Cys894, Cys903, and His904. Positions 898 to 907 are enriched in basic residues; it reads KKYKQCHGKI.

Belongs to the SecA family. Monomer and homodimer. Part of the essential Sec protein translocation apparatus which comprises SecA, SecYEG and auxiliary proteins SecDF-YajC and YidC. It depends on Zn(2+) as a cofactor.

Its subcellular location is the cell inner membrane. It localises to the cytoplasm. It catalyses the reaction ATP + H2O + cellular proteinSide 1 = ADP + phosphate + cellular proteinSide 2.. Part of the Sec protein translocase complex. Interacts with the SecYEG preprotein conducting channel. Has a central role in coupling the hydrolysis of ATP to the transfer of proteins into and across the cell membrane, serving both as a receptor for the preprotein-SecB complex and as an ATP-driven molecular motor driving the stepwise translocation of polypeptide chains across the membrane. The chain is Protein translocase subunit SecA from Aliivibrio fischeri (strain MJ11) (Vibrio fischeri).